A 180-amino-acid polypeptide reads, in one-letter code: ATP-dependent protease subunit HslV (180 aa).

Residue T7 is part of the active site. The Na(+) site is built by G165, C168, and T171.

The protein belongs to the peptidase T1B family. HslV subfamily. As to quaternary structure, a double ring-shaped homohexamer of HslV is capped on each side by a ring-shaped HslU homohexamer. The assembly of the HslU/HslV complex is dependent on binding of ATP.

It localises to the cytoplasm. It carries out the reaction ATP-dependent cleavage of peptide bonds with broad specificity.. With respect to regulation, allosterically activated by HslU binding. Functionally, protease subunit of a proteasome-like degradation complex believed to be a general protein degrading machinery. The protein is ATP-dependent protease subunit HslV of Bacillus cytotoxicus (strain DSM 22905 / CIP 110041 / 391-98 / NVH 391-98).